The sequence spans 412 residues: CCA-adding enzyme (412 aa).

Residues S41 and K44 each coordinate ATP. Positions 41 and 44 each coordinate CTP. D53, D55, and D106 together coordinate Mg(2+). H129, K149, and Y158 together coordinate ATP. H129, K149, and Y158 together coordinate CTP.

The protein belongs to the tRNA nucleotidyltransferase/poly(A) polymerase family. Archaeal CCA-adding enzyme subfamily. In terms of assembly, homodimer. Mg(2+) serves as cofactor.

The enzyme catalyses a tRNA precursor + 2 CTP + ATP = a tRNA with a 3' CCA end + 3 diphosphate. The catalysed reaction is a tRNA with a 3' CCA end + 2 CTP + ATP = a tRNA with a 3' CCACCA end + 3 diphosphate. Catalyzes the addition and repair of the essential 3'-terminal CCA sequence in tRNAs without using a nucleic acid template. Adds these three nucleotides in the order of C, C, and A to the tRNA nucleotide-73, using CTP and ATP as substrates and producing inorganic pyrophosphate. tRNA 3'-terminal CCA addition is required both for tRNA processing and repair. Also involved in tRNA surveillance by mediating tandem CCA addition to generate a CCACCA at the 3' terminus of unstable tRNAs. While stable tRNAs receive only 3'-terminal CCA, unstable tRNAs are marked with CCACCA and rapidly degraded. The sequence is that of CCA-adding enzyme from Saccharolobus islandicus (strain Y.N.15.51 / Yellowstone #2) (Sulfolobus islandicus).